The sequence spans 20 residues: GCPQTPRCTNYAEKGQCPPN.

It is found in the secreted. Functionally, displays antimicrobial activity against the Gram-negative bacterium A.hydrophila. The sequence is that of Antimicrobial peptide AJN-10 from Anguilla japonica (Japanese eel).